Here is a 246-residue protein sequence, read N- to C-terminus: Uridylate kinase (246 aa).

20–23 is a binding site for ATP; sequence KISG. Positions 28–33 are involved in allosteric activation by GTP; sequence GDQGYG. G62 provides a ligand contact to UMP. ATP contacts are provided by G63 and R67. Residues D82 and 143–150 contribute to the UMP site; that span reads TGNPYFTT. Residues T170, Y176, and D179 each contribute to the ATP site.

Belongs to the UMP kinase family. Homohexamer.

The protein resides in the cytoplasm. The enzyme catalyses UMP + ATP = UDP + ADP. It functions in the pathway pyrimidine metabolism; CTP biosynthesis via de novo pathway; UDP from UMP (UMPK route): step 1/1. With respect to regulation, allosterically activated by GTP. Inhibited by UTP. In terms of biological role, catalyzes the reversible phosphorylation of UMP to UDP. In Cereibacter sphaeroides (strain ATCC 17023 / DSM 158 / JCM 6121 / CCUG 31486 / LMG 2827 / NBRC 12203 / NCIMB 8253 / ATH 2.4.1.) (Rhodobacter sphaeroides), this protein is Uridylate kinase.